A 338-amino-acid polypeptide reads, in one-letter code: Glyceraldehyde-3-phosphate dehydrogenase (338 aa).

NAD(+) is bound by residues 13-14, D35, and R80; that span reads RI. D-glyceraldehyde 3-phosphate is bound by residues 151–153, T182, 211–212, and R234; these read SCT and TG. Residue C152 is the Nucleophile of the active site. Position 316 (N316) interacts with NAD(+).

Belongs to the glyceraldehyde-3-phosphate dehydrogenase family. As to quaternary structure, homotetramer.

The protein localises to the cytoplasm. The catalysed reaction is D-glyceraldehyde 3-phosphate + phosphate + NAD(+) = (2R)-3-phospho-glyceroyl phosphate + NADH + H(+). It participates in carbohydrate degradation; glycolysis; pyruvate from D-glyceraldehyde 3-phosphate: step 1/5. This chain is Glyceraldehyde-3-phosphate dehydrogenase (GPDA), found in Colletotrichum gloeosporioides (Anthracnose fungus).